The sequence spans 195 residues: N-terminal acetyltransferase B complex catalytic subunit NAT3 (195 aa).

The N-acetyltransferase domain occupies 2 to 172 (TTIQPFEPVD…DAFDMRKAMA (171 aa)).

The protein belongs to the acetyltransferase family. GNAT subfamily. As to quaternary structure, component of the N-terminal acetyltransferase B (NatB) complex, which is composed of NAT3 and MDM20.

The protein localises to the cytoplasm. The enzyme catalyses N-terminal L-methionyl-L-asparaginyl-[protein] + acetyl-CoA = N-terminal N(alpha)-acetyl-L-methionyl-L-asparaginyl-[protein] + CoA + H(+). The catalysed reaction is N-terminal L-methionyl-L-glutaminyl-[protein] + acetyl-CoA = N-terminal N(alpha)-acetyl-L-methionyl-L-glutaminyl-[protein] + CoA + H(+). It catalyses the reaction N-terminal L-methionyl-L-aspartyl-[protein] + acetyl-CoA = N-terminal N(alpha)-acetyl-L-methionyl-L-aspartyl-[protein] + CoA + H(+). It carries out the reaction N-terminal L-methionyl-L-glutamyl-[protein] + acetyl-CoA = N-terminal N(alpha)-acetyl-L-methionyl-L-glutamyl-[protein] + CoA + H(+). Catalytic subunit of the NatB N-terminal acetyltransferase, which catalyzes acetylation of the amino-terminal methionine residues of all proteins beginning with Met-Asp or Met-Glu and of some proteins beginning with Met-Asn, Met-Gln or Met-Met. NatB acetylates TPM1 protein and regulates tropomyocin-actin interactions, it is presumed to N-acetylate 15% of all yeast proteins. This Saccharomyces cerevisiae (strain ATCC 204508 / S288c) (Baker's yeast) protein is N-terminal acetyltransferase B complex catalytic subunit NAT3.